A 450-amino-acid chain; its full sequence is Regulator of sigma E protease (450 aa).

His-22 contacts Zn(2+). Glu-23 is a catalytic residue. His-26 serves as a coordination point for Zn(2+). Residues 98–120 (AAIIAAGPVANFIFAIFAYWLVF) traverse the membrane as a helical segment. 2 PDZ domains span residues 115–186 (AYWL…APFG) and 199–291 (HWAF…TPDT). A run of 2 helical transmembrane segments spans residues 376 to 398 (VIYY…LFPL) and 426 to 445 (FSYR…ALFN).

This sequence belongs to the peptidase M50B family. In terms of assembly, interacts with RseA. It depends on Zn(2+) as a cofactor.

It localises to the cell inner membrane. Its function is as follows. A site-2 regulated intramembrane protease (S2P) that cleaves the peptide bond between 'Ala-108' and 'Cys-109' in the transmembrane region of RseA. Part of a regulated intramembrane proteolysis (RIP) cascade. Acts on DegS-cleaved RseA to release the cytoplasmic domain of RseA. This provides the cell with sigma-E (RpoE) activity through the proteolysis of RseA. The polypeptide is Regulator of sigma E protease (rseP) (Salmonella typhi).